The primary structure comprises 152 residues: Homeobox protein ceh-63 (152 aa).

Polar residues predominate over residues 21–30 (NDTNSSQQIK). 2 disordered regions span residues 21–48 (NDTN…RTTF) and 92–126 (RRTK…SQHV). The span at 35 to 44 (PPKRSNRPTK) shows a compositional bias: basic residues. Residues 41-100 (RPTKRTTFTSEQVTLLELEFAKNEYICKDRRGELAQTIELTECQVKTWFQNRRTKKRRCT) constitute a DNA-binding region (homeobox). The segment covering 116-126 (PSPQNPSSQHV) has biased composition (polar residues).

In terms of assembly, may interact with homeobox protein ceh-14.

The protein resides in the nucleus. Probable transcription factor, modulating expression of helix-loop-helix protein mbr-1, perhaps acting in concert with homeobox protein ceh-14. May play a minor role in axon guidance in the DVC interneuron. The chain is Homeobox protein ceh-63 from Caenorhabditis elegans.